The chain runs to 267 residues: Glutamate racemase (267 aa).

Residues 9–10 (DS) and 41–42 (YS) contribute to the substrate site. Cys-73 acts as the Proton donor/acceptor in catalysis. 74-75 (NT) lines the substrate pocket. Cys-184 serves as the catalytic Proton donor/acceptor. 185–186 (TH) is a substrate binding site.

The protein belongs to the aspartate/glutamate racemases family.

It carries out the reaction L-glutamate = D-glutamate. The protein operates within cell wall biogenesis; peptidoglycan biosynthesis. Its function is as follows. Provides the (R)-glutamate required for cell wall biosynthesis. The protein is Glutamate racemase of Glaesserella parasuis serovar 5 (strain SH0165) (Haemophilus parasuis).